Consider the following 264-residue polypeptide: tRNA pseudouridine synthase A (264 aa).

The Nucleophile role is filled by Asp-51. Tyr-109 contributes to the substrate binding site.

It belongs to the tRNA pseudouridine synthase TruA family. As to quaternary structure, homodimer.

It carries out the reaction uridine(38/39/40) in tRNA = pseudouridine(38/39/40) in tRNA. Functionally, formation of pseudouridine at positions 38, 39 and 40 in the anticodon stem and loop of transfer RNAs. This chain is tRNA pseudouridine synthase A, found in Staphylococcus aureus (strain MRSA252).